A 204-amino-acid polypeptide reads, in one-letter code: Holliday junction branch migration complex subunit RuvA (204 aa).

The segment at 1 to 64 (MIGRLRGIIL…EDAQLLFGFN (64 aa)) is domain I. Residues 65-143 (SKPERALFRE…GMHGDLFASD (79 aa)) are domain II. Positions 144 to 155 (APFALTSEMPKE) are flexible linker. The segment at 156–204 (TANDAEGEAVAALTALGYKPQEASRMIVKVGKPDADCETLIREALRAAI) is domain III.

The protein belongs to the RuvA family. In terms of assembly, homotetramer. Forms an RuvA(8)-RuvB(12)-Holliday junction (HJ) complex. HJ DNA is sandwiched between 2 RuvA tetramers; dsDNA enters through RuvA and exits via RuvB. An RuvB hexamer assembles on each DNA strand where it exits the tetramer. Each RuvB hexamer is contacted by two RuvA subunits (via domain III) on 2 adjacent RuvB subunits; this complex drives branch migration. In the full resolvosome a probable DNA-RuvA(4)-RuvB(12)-RuvC(2) complex forms which resolves the HJ.

The protein localises to the cytoplasm. In terms of biological role, the RuvA-RuvB-RuvC complex processes Holliday junction (HJ) DNA during genetic recombination and DNA repair, while the RuvA-RuvB complex plays an important role in the rescue of blocked DNA replication forks via replication fork reversal (RFR). RuvA specifically binds to HJ cruciform DNA, conferring on it an open structure. The RuvB hexamer acts as an ATP-dependent pump, pulling dsDNA into and through the RuvAB complex. HJ branch migration allows RuvC to scan DNA until it finds its consensus sequence, where it cleaves and resolves the cruciform DNA. This Erwinia tasmaniensis (strain DSM 17950 / CFBP 7177 / CIP 109463 / NCPPB 4357 / Et1/99) protein is Holliday junction branch migration complex subunit RuvA.